A 406-amino-acid polypeptide reads, in one-letter code: Argininosuccinate synthase (406 aa).

9–17 lines the ATP pocket; that stretch reads AYSGGLDTS. L-citrulline is bound at residue Y86. G116 is a binding site for ATP. Positions 118, 122, and 123 each coordinate L-aspartate. L-citrulline is bound at residue N122. L-citrulline-binding residues include R126, S174, S183, E259, and Y271.

Belongs to the argininosuccinate synthase family. Type 1 subfamily. Homotetramer.

The protein resides in the cytoplasm. It carries out the reaction L-citrulline + L-aspartate + ATP = 2-(N(omega)-L-arginino)succinate + AMP + diphosphate + H(+). Its pathway is amino-acid biosynthesis; L-arginine biosynthesis; L-arginine from L-ornithine and carbamoyl phosphate: step 2/3. This chain is Argininosuccinate synthase, found in Geobacillus kaustophilus (strain HTA426).